The primary structure comprises 169 residues: Peptide deformylase (169 aa).

Residues cysteine 91 and histidine 133 each coordinate Fe cation. Glutamate 134 is an active-site residue. Residue histidine 137 coordinates Fe cation.

It belongs to the polypeptide deformylase family. The cofactor is Fe(2+).

The catalysed reaction is N-terminal N-formyl-L-methionyl-[peptide] + H2O = N-terminal L-methionyl-[peptide] + formate. Its function is as follows. Removes the formyl group from the N-terminal Met of newly synthesized proteins. Requires at least a dipeptide for an efficient rate of reaction. N-terminal L-methionine is a prerequisite for activity but the enzyme has broad specificity at other positions. The protein is Peptide deformylase of Pectobacterium atrosepticum (strain SCRI 1043 / ATCC BAA-672) (Erwinia carotovora subsp. atroseptica).